A 513-amino-acid polypeptide reads, in one-letter code: Activin receptor type-2B (513 aa).

The signal sequence occupies residues Met-1–Gly-18. Residues Ser-19–Thr-137 are Extracellular-facing. 5 disulfides stabilise this stretch: Cys-29–Cys-59, Cys-49–Cys-77, Cys-84–Cys-103, Cys-90–Cys-102, and Cys-104–Cys-109. Residues Asn-42 and Asn-65 are each glycosylated (N-linked (GlcNAc...) asparagine). Residues Val-138 to Trp-158 traverse the membrane as a helical segment. The Cytoplasmic segment spans residues Met-159–Ile-513. The 292-residue stretch at Leu-190–Leu-481 folds into the Protein kinase domain. ATP is bound by residues Lys-196–Val-204 and Lys-217. Catalysis depends on Asp-322, which acts as the Proton acceptor. The interval Asp-492–Ile-513 is interaction with DYNLT1.

This sequence belongs to the protein kinase superfamily. TKL Ser/Thr protein kinase family. TGFB receptor subfamily. As to quaternary structure, forms an activin receptor complex with activin type II receptors such as ACVR1B. Interacts with VPS39. Interacts with DYNLT1. Interacts with BMP3. Interacts with BMP2. Mg(2+) is required as a cofactor. The cofactor is Mn(2+). Phosphorylated. Constitutive phosphorylation is in part catalyzed by its own kinase activity.

It is found in the cell membrane. It carries out the reaction L-threonyl-[receptor-protein] + ATP = O-phospho-L-threonyl-[receptor-protein] + ADP + H(+). The enzyme catalyses L-seryl-[receptor-protein] + ATP = O-phospho-L-seryl-[receptor-protein] + ADP + H(+). Its function is as follows. Transmembrane serine/threonine kinase activin type-2 receptor forming an activin receptor complex with activin type-1 serine/threonine kinase receptors (ACVR1, ACVR1B or ACVR1c). Transduces the activin signal from the cell surface to the cytoplasm and is thus regulating many physiological and pathological processes including neuronal differentiation and neuronal survival, hair follicle development and cycling, FSH production by the pituitary gland, wound healing, extracellular matrix production, immunosuppression and carcinogenesis. Activin is also thought to have a paracrine or autocrine role in follicular development in the ovary. Within the receptor complex, the type-2 receptors act as a primary activin receptors (binds activin-A/INHBA, activin-B/INHBB as well as inhibin-A/INHA-INHBA). The type-1 receptors like ACVR1B act as downstream transducers of activin signals. Activin binds to type-2 receptor at the plasma membrane and activates its serine-threonine kinase. The activated receptor type-2 then phosphorylates and activates the type-1 receptor. Once activated, the type-1 receptor binds and phosphorylates the SMAD proteins SMAD2 and SMAD3, on serine residues of the C-terminal tail. Soon after their association with the activin receptor and subsequent phosphorylation, SMAD2 and SMAD3 are released into the cytoplasm where they interact with the common partner SMAD4. This SMAD complex translocates into the nucleus where it mediates activin-induced transcription. Inhibitory SMAD7, which is recruited to ACVR1B through FKBP1A, can prevent the association of SMAD2 and SMAD3 with the activin receptor complex, thereby blocking the activin signal. Activin signal transduction is also antagonized by the binding to the receptor of inhibin-B via the IGSF1 inhibin coreceptor. The sequence is that of Activin receptor type-2B (Acvr2b) from Rattus norvegicus (Rat).